Reading from the N-terminus, the 63-residue chain is Large ribosomal subunit protein bL28 (63 aa).

The disordered stretch occupies residues 1–20 (MSKRCAITGKGPMVGNNVSH).

It belongs to the bacterial ribosomal protein bL28 family.

The chain is Large ribosomal subunit protein bL28 from Campylobacter concisus (strain 13826).